The chain runs to 576 residues: Proline--tRNA ligase (576 aa).

The protein belongs to the class-II aminoacyl-tRNA synthetase family. ProS type 1 subfamily. In terms of assembly, homodimer.

It is found in the cytoplasm. It catalyses the reaction tRNA(Pro) + L-proline + ATP = L-prolyl-tRNA(Pro) + AMP + diphosphate. Functionally, catalyzes the attachment of proline to tRNA(Pro) in a two-step reaction: proline is first activated by ATP to form Pro-AMP and then transferred to the acceptor end of tRNA(Pro). As ProRS can inadvertently accommodate and process non-cognate amino acids such as alanine and cysteine, to avoid such errors it has two additional distinct editing activities against alanine. One activity is designated as 'pretransfer' editing and involves the tRNA(Pro)-independent hydrolysis of activated Ala-AMP. The other activity is designated 'posttransfer' editing and involves deacylation of mischarged Ala-tRNA(Pro). The misacylated Cys-tRNA(Pro) is not edited by ProRS. The polypeptide is Proline--tRNA ligase (Leptospira interrogans serogroup Icterohaemorrhagiae serovar Lai (strain 56601)).